Here is a 35-residue protein sequence, read N- to C-terminus: Photosystem II reaction center protein T (35 aa).

The helical transmembrane segment at alanine 3–phenylalanine 23 threads the bilayer.

It belongs to the PsbT family. As to quaternary structure, PSII is composed of 1 copy each of membrane proteins PsbA, PsbB, PsbC, PsbD, PsbE, PsbF, PsbH, PsbI, PsbJ, PsbK, PsbL, PsbM, PsbT, PsbY, PsbZ, Psb30/Ycf12, at least 3 peripheral proteins of the oxygen-evolving complex and a large number of cofactors. It forms dimeric complexes.

It is found in the plastid. Its subcellular location is the chloroplast thylakoid membrane. Found at the monomer-monomer interface of the photosystem II (PS II) dimer, plays a role in assembly and dimerization of PSII. PSII is a light-driven water plastoquinone oxidoreductase, using light energy to abstract electrons from H(2)O, generating a proton gradient subsequently used for ATP formation. The sequence is that of Photosystem II reaction center protein T from Cedrus deodara (Deodar cedar).